The primary structure comprises 85 residues: Sec-independent protein translocase protein TatA (85 aa).

A helical membrane pass occupies residues 1–21; the sequence is MAGLQGWQLVIIILLAILLFA. The disordered stretch occupies residues 43–85; it reads VKQMRTEGKDAKDERSGTGSTAADEPVEGRVVDRDETDPRDQR. Composition is skewed to basic and acidic residues over residues 44-58 and 69-85; these read KQMRTEGKDAKDERS and VEGRVVDRDETDPRDQR.

It belongs to the TatA/E family. The Tat system comprises two distinct complexes: a TatABC complex, containing multiple copies of TatA, TatB and TatC subunits, and a separate TatA complex, containing only TatA subunits. Substrates initially bind to the TatABC complex, which probably triggers association of the separate TatA complex to form the active translocon.

It is found in the cell membrane. Functionally, part of the twin-arginine translocation (Tat) system that transports large folded proteins containing a characteristic twin-arginine motif in their signal peptide across membranes. TatA could form the protein-conducting channel of the Tat system. The sequence is that of Sec-independent protein translocase protein TatA from Micrococcus luteus (strain ATCC 4698 / DSM 20030 / JCM 1464 / CCM 169 / CCUG 5858 / IAM 1056 / NBRC 3333 / NCIMB 9278 / NCTC 2665 / VKM Ac-2230) (Micrococcus lysodeikticus).